A 1032-amino-acid chain; its full sequence is Connector enhancer of kinase suppressor of ras 2 (1032 aa).

In terms of domain architecture, SAM spans 11–76 (WSPSQVVDWM…LEAVDLLCAL (66 aa)). S12 carries the phosphoserine modification. Positions 84–178 (NLKTLSHKLN…TIVQQDCTVY (95 aa)) constitute a CRIC domain. The PDZ domain occupies 215–297 (VIQLANIKPS…GVILTLKKRP (83 aa)). Low complexity predominate over residues 324–340 (RSPTSSVATPSSTISTP). The disordered stretch occupies residues 324–349 (RSPTSSVATPSSTISTPTKRDSSALQ). Residues 332-515 (TPSSTISTPT…PTHYSLLPSL (184 aa)) form the DUF1170 domain. A phosphoserine mark is found at S338 and S390. Residues 480 to 509 (EEYMFQRNSKKDTGKKSKKKGDKSTSPTHY) form a disordered region. Positions 570-669 (RGDCEGWLWK…WLNRINMLTA (100 aa)) constitute a PH domain. The interval 682–766 (DYWSESDKEE…PIRKTASQRR (85 aa)) is disordered. Position 683 is a phosphotyrosine (Y683). The span at 683 to 693 (YWSESDKEEAD) shows a compositional bias: acidic residues. Residues S685 and S687 each carry the phosphoserine modification. The span at 701–714 (DSPPPPYDTYPRPP) shows a compositional bias: pro residues. Positions 730-740 (LSSTETSQSQS) are enriched in low complexity. 2 positions are modified to phosphoserine: S756 and S767. Residues 866–900 (DPQDDIQPPEVEEEEEEEEEEAAGENIGEKNENRE) are disordered. Positions 874–917 (PEVEEEEEEEEEEAAGENIGEKNENREEKLGDSLQDLYRALEEA) form a coiled coil. A compositionally biased stretch (acidic residues) spans 875-888 (EVEEEEEEEEEEAA). S906 is modified (phosphoserine).

This sequence belongs to the CNKSR family. As to quaternary structure, interacts with RAF1, RAB2L and RAL GTPase proteins. Interacts with DLG4 and AIP1. Phosphorylated on tyrosine. In terms of tissue distribution, expressed in neurons and localized in the cell body and neurites.

It localises to the cytoplasm. The protein localises to the membrane. In terms of biological role, may function as an adapter protein or regulator of Ras signaling pathways, in synaptic junctions. In Rattus norvegicus (Rat), this protein is Connector enhancer of kinase suppressor of ras 2 (Cnksr2).